The primary structure comprises 207 residues: Uracil phosphoribosyltransferase (207 aa).

Residues R77, R102, and 129-137 (DPMLATGGS) contribute to the 5-phospho-alpha-D-ribose 1-diphosphate site. Uracil contacts are provided by residues I192 and 197–199 (GDA). D198 provides a ligand contact to 5-phospho-alpha-D-ribose 1-diphosphate.

The protein belongs to the UPRTase family. Mg(2+) serves as cofactor.

The enzyme catalyses UMP + diphosphate = 5-phospho-alpha-D-ribose 1-diphosphate + uracil. The protein operates within pyrimidine metabolism; UMP biosynthesis via salvage pathway; UMP from uracil: step 1/1. Allosterically activated by GTP. Functionally, catalyzes the conversion of uracil and 5-phospho-alpha-D-ribose 1-diphosphate (PRPP) to UMP and diphosphate. The chain is Uracil phosphoribosyltransferase from Mycobacterium marinum (strain ATCC BAA-535 / M).